Consider the following 357-residue polypeptide: MPQTLHVHSRVKDYDILFTDHVLKTLADCLGERKQRKLLFITDQTVYHLYQTLFEEFAQQYNAFVHVCPPGGQTKSLERVSAIYDQLIAENFSKKDMIVTIGGGVVGDLGGFVAATYSRGIPYIQIPTTLLSQVDSSIGGKVGVHFKSLTNMIGSIYPPEAIIISTTFLETLPQREFSCGISEMLKIGFIHDRPLFQQLRDFQKETDKQGLERLIYQSISNKKQIVEQDEFENGLRMSLNFGHTLGHAIESLCHHDFYHHGEAIAIGMVVDAKLAVSKGLLPKEDLDSLLQVFERYQLPTTLERADVSATSLFDVFKTDKKNSEQHIIFILPTETGFTTLAINKDDHQFVEKLDSLL.

NAD(+) is bound by residues 104–108 (GVVGD), 128–129 (TT), Lys141, and 168–171 (FLET). Glu183, His243, and His260 together coordinate Zn(2+).

The protein belongs to the sugar phosphate cyclases superfamily. Dehydroquinate synthase family. It depends on Co(2+) as a cofactor. Zn(2+) is required as a cofactor. The cofactor is NAD(+).

Its subcellular location is the cytoplasm. The enzyme catalyses 7-phospho-2-dehydro-3-deoxy-D-arabino-heptonate = 3-dehydroquinate + phosphate. It participates in metabolic intermediate biosynthesis; chorismate biosynthesis; chorismate from D-erythrose 4-phosphate and phosphoenolpyruvate: step 2/7. Functionally, catalyzes the conversion of 3-deoxy-D-arabino-heptulosonate 7-phosphate (DAHP) to dehydroquinate (DHQ). This Streptococcus pyogenes serotype M49 (strain NZ131) protein is 3-dehydroquinate synthase.